The sequence spans 301 residues: MSEDIRRGPGRPPKKRVVPNFERKGILEKPVRPQSRLEFSYDNPLIFKNLFIYFKNLKSKNILVRCTPTEITFFSRDQSQASFVIATIDGKNVNHYYASDVFWLGINRELVEKMFNSIDRSFLKITIVHRYDKPETLFFIFTDFDIDKECTYQITVSEPELDMDLIEMEKSISEERLKNYPLRWEFTSKQLKKTFSDLSNYTELVTIEKLGGDTPLHLYFQKFNSISYHEMYKSSNKINLTSTIPKSQVFQINVKIAHIKSLASAMVTDKIRILCEENGNLIFQSEMDALMLNTITLNNTI.

This sequence belongs to the asfivirus E301R family. Interacts with host IRF3.

Plays a role in the inhibition of host innate immune system by acting as a negatively regulator of type I interferon production. Mechanistically, interacts with and prevents host IRF3 nuclear localization to inhibit its transcriptional activity. This is an uncharacterized protein from African swine fever virus (strain Badajoz 1971 Vero-adapted) (Ba71V).